A 184-amino-acid chain; its full sequence is Cytidylate kinase (184 aa).

8-16 (GQPGSGKTT) is an ATP binding site.

Belongs to the cytidylate kinase family. Type 2 subfamily.

The protein localises to the cytoplasm. The catalysed reaction is CMP + ATP = CDP + ADP. It carries out the reaction dCMP + ATP = dCDP + ADP. The sequence is that of Cytidylate kinase from Pyrobaculum arsenaticum (strain DSM 13514 / JCM 11321 / PZ6).